The primary structure comprises 247 residues: Uroporphyrinogen-III C-methyltransferase (247 aa).

Residues P12, 117–118 (TA), M168, A197, and A225 each bind S-adenosyl-L-homocysteine.

It belongs to the precorrin methyltransferase family.

The catalysed reaction is uroporphyrinogen III + 2 S-adenosyl-L-methionine = precorrin-2 + 2 S-adenosyl-L-homocysteine + H(+). Its pathway is cofactor biosynthesis; adenosylcobalamin biosynthesis; precorrin-2 from uroporphyrinogen III: step 1/1. The protein operates within porphyrin-containing compound metabolism; siroheme biosynthesis; precorrin-2 from uroporphyrinogen III: step 1/1. Catalyzes the two successive C-2 and C-7 methylation reactions involved in the conversion of uroporphyrinogen III to precorrin-2 via the intermediate formation of precorrin-1. It is a step in the biosynthesis of both cobalamin (vitamin B12) and siroheme. The sequence is that of Uroporphyrinogen-III C-methyltransferase from Pseudomonas fluorescens.